The sequence spans 108 residues: Heme oxygenase (staphylobilin-producing) 2 (108 aa).

The 92-residue stretch at 2–93 folds into the ABM domain; sequence FMAENRLQLQ…DDDGQQSPIL (92 aa). Asn-6 provides a ligand contact to Fe cation. Heme contacts are provided by residues 21–28 and His-76; that span reads RFYNRQGI.

This sequence belongs to the antibiotic biosynthesis monooxygenase family. Heme-degrading monooxygenase IsdG subfamily. In terms of assembly, homodimer.

The protein resides in the cytoplasm. It catalyses the reaction heme b + 5 AH2 + 4 O2 + 2 H(+) = delta-staphylobilin + Fe(2+) + formaldehyde + 5 A + 4 H2O. The catalysed reaction is heme b + 5 AH2 + 4 O2 + 2 H(+) = beta-staphylobilin + Fe(2+) + formaldehyde + 5 A + 4 H2O. In terms of biological role, allows bacterial pathogens to use the host heme as an iron source. Catalyzes the oxidative degradation of the heme macrocyclic porphyrin ring to the oxo-bilirubin chromophore staphylobilin (a mixture of the linear tetrapyrroles 5-oxo-delta-bilirubin and 15-oxo-beta-bilirubin) in the presence of a suitable electron donor such as ascorbate or NADPH--cytochrome P450 reductase, with subsequent release of free iron. This Staphylococcus aureus (strain MRSA252) protein is Heme oxygenase (staphylobilin-producing) 2 (isdI).